A 257-amino-acid polypeptide reads, in one-letter code: tRNA pseudouridine synthase A (257 aa).

D53 acts as the Nucleophile in catalysis. Residue Y111 participates in substrate binding.

It belongs to the tRNA pseudouridine synthase TruA family. Homodimer.

The catalysed reaction is uridine(38/39/40) in tRNA = pseudouridine(38/39/40) in tRNA. Formation of pseudouridine at positions 38, 39 and 40 in the anticodon stem and loop of transfer RNAs. This chain is tRNA pseudouridine synthase A, found in Xanthomonas axonopodis pv. citri (strain 306).